The chain runs to 417 residues: Serine hydroxymethyltransferase (417 aa).

Residues Leu-122 and 126–128 (GHL) each bind (6S)-5,6,7,8-tetrahydrofolate. Lys-231 carries the N6-(pyridoxal phosphate)lysine modification.

It belongs to the SHMT family. Homodimer. The cofactor is pyridoxal 5'-phosphate.

The protein resides in the cytoplasm. The catalysed reaction is (6R)-5,10-methylene-5,6,7,8-tetrahydrofolate + glycine + H2O = (6S)-5,6,7,8-tetrahydrofolate + L-serine. Its pathway is one-carbon metabolism; tetrahydrofolate interconversion. The protein operates within amino-acid biosynthesis; glycine biosynthesis; glycine from L-serine: step 1/1. Functionally, catalyzes the reversible interconversion of serine and glycine with tetrahydrofolate (THF) serving as the one-carbon carrier. This reaction serves as the major source of one-carbon groups required for the biosynthesis of purines, thymidylate, methionine, and other important biomolecules. Also exhibits THF-independent aldolase activity toward beta-hydroxyamino acids, producing glycine and aldehydes, via a retro-aldol mechanism. In Caldicellulosiruptor saccharolyticus (strain ATCC 43494 / DSM 8903 / Tp8T 6331), this protein is Serine hydroxymethyltransferase.